Reading from the N-terminus, the 700-residue chain is Elongation factor G (700 aa).

The 277-residue stretch at 10–286 (SKVRNIGIMA…AVIDYLPSPL (277 aa)) folds into the tr-type G domain. GTP is bound by residues 19 to 26 (AHIDAGKT), 83 to 87 (DTPGH), and 137 to 140 (NKMD).

Belongs to the TRAFAC class translation factor GTPase superfamily. Classic translation factor GTPase family. EF-G/EF-2 subfamily.

The protein localises to the cytoplasm. Catalyzes the GTP-dependent ribosomal translocation step during translation elongation. During this step, the ribosome changes from the pre-translocational (PRE) to the post-translocational (POST) state as the newly formed A-site-bound peptidyl-tRNA and P-site-bound deacylated tRNA move to the P and E sites, respectively. Catalyzes the coordinated movement of the two tRNA molecules, the mRNA and conformational changes in the ribosome. This Mycolicibacterium gilvum (strain PYR-GCK) (Mycobacterium gilvum (strain PYR-GCK)) protein is Elongation factor G.